The chain runs to 348 residues: Major outer membrane protein (348 aa).

Positions 1-20 (MKKTIVALAVAAVAATSANA) are cleaved as a signal peptide.

As to quaternary structure, disulfide bond interactions within and between MOMP molecules and other components form high molecular-weight oligomers.

The protein resides in the cell outer membrane. Functionally, structural rigidity of the outer membrane of elementary bodies and porin forming, permitting diffusion of solutes through the intracellular reticulate body membrane. This chain is Major outer membrane protein (ompH), found in Pasteurella multocida (strain Pm70).